We begin with the raw amino-acid sequence, 177 residues long: Ribonuclease H (177 aa).

Positions 1-142 constitute an RNase H type-1 domain; that stretch reads MSKQVEIFTD…ADELAREGMA (142 aa). Asp-10, Glu-48, Asp-70, and Asp-134 together coordinate Mg(2+). Positions 126–138 are enriched in basic and acidic residues; that stretch reads GHTENERADELAR. Residues 126-177 form a disordered region; it reads GHTENERADELAREGMAPFKKGSFKPAASAPKPDAQLKQPVATKARRSTQSY.

It belongs to the RNase H family. Monomer. Mg(2+) is required as a cofactor.

Its subcellular location is the cytoplasm. The catalysed reaction is Endonucleolytic cleavage to 5'-phosphomonoester.. Its function is as follows. Endonuclease that specifically degrades the RNA of RNA-DNA hybrids. In Mesorhizobium japonicum (strain LMG 29417 / CECT 9101 / MAFF 303099) (Mesorhizobium loti (strain MAFF 303099)), this protein is Ribonuclease H.